The sequence spans 179 residues: Auxin-induced protein IAA6 (179 aa).

The EAR-like (transcriptional repression) motif lies at Leu13 to Leu17. The disordered stretch occupies residues Phe31–Lys52. In terms of domain architecture, PB1 spans Lys75–Asp163.

This sequence belongs to the Aux/IAA family. In terms of assembly, homodimers and heterodimers.

Its subcellular location is the nucleus. Functionally, aux/IAA proteins are short-lived transcriptional factors that function as repressors of early auxin response genes at low auxin concentrations. Repression is thought to result from the interaction with auxin response factors (ARFs), proteins that bind to the auxin-responsive promoter element (AuxRE). Formation of heterodimers with ARF proteins may alter their ability to modulate early auxin response genes expression. This is Auxin-induced protein IAA6 (IAA6) from Pisum sativum (Garden pea).